The sequence spans 558 residues: Transcription termination factor MTEF18, mitochondrial (558 aa).

The N-terminal 58 residues, 1–58 (MFMVRLKFASISHNFSTVAAKHRRVPSKYKSLAIGKAQQAITDYLHTTRSLSYTHAEQ), are a transit peptide targeting the mitochondrion.

Belongs to the mTERF family.

The protein localises to the mitochondrion. In terms of biological role, transcription termination factor involved in the regulation of mitochondrial-encoded gene expression. Essential for normal plant growth and development. This Arabidopsis thaliana (Mouse-ear cress) protein is Transcription termination factor MTEF18, mitochondrial.